A 581-amino-acid polypeptide reads, in one-letter code: Tetratricopeptide repeat and J domain-containing co-chaperone DNJ1 (581 aa).

The N-terminal stretch at 1 to 19 is a signal peptide; the sequence is MKATLLPSLLALSLTLCLA. TPR repeat units lie at residues 48 to 81, 82 to 115, 116 to 149, 221 to 254, 257 to 293, 378 to 411, and 412 to 445; these read ASQHLTQANVALQSGRYQDALSAFDLALQADPSS, WLTYYRRATAQLSLGRTSAALQDFQSLLKLNPKF, DKAYLQQAKVYLKEGDCDKAKQALKTYDSIRAEK, LETRLVRARCQTMKGRIEDAMADWTRAVHLTPSP, LRRLSVLSYFVVSEPGSQSRDAGLQHLKACLHSDPDN, LELHTMYCKAYTELNDMDKAMPYCELVLAKDPDN, and VEATLARAELALQREDYDQAVRDLTKAFDASGRT. The N-linked (GlcNAc...) asparagine glycan is linked to N293. One can recognise a J domain in the interval 467 to 528; sequence DYYKVLGVKR…ELRKKYDQGD (62 aa). The segment at 522-544 is disordered; sequence KKYDQGDDPNDPMGGQQGGYGNP.

In terms of assembly, interacts with the ER chaperone BIP1.

The protein resides in the endoplasmic reticulum lumen. Functionally, endoplasmic reticulum (ER) protein that functions as a co-chaperone for BIP1 during ER stress. Might be specifically involved in the refolding of N-glycosylated proteins. This is Tetratricopeptide repeat and J domain-containing co-chaperone DNJ1 from Mycosarcoma maydis (Corn smut fungus).